We begin with the raw amino-acid sequence, 704 residues long: E3 ubiquitin-protein ligase MBR1 (704 aa).

Disordered stretches follow at residues 1–20, 37–61, 176–197, 245–354, 381–403, and 436–525; these read MNPM…VNQV, NPAD…SSSH, SSLG…SPFG, LSLA…GENQ, SNPS…PRSN, and SLFV…RHRR. Residues 43–61 show a composition bias toward polar residues; the sequence is FPNNSTPSGRPTYASSSSH. 2 stretches are compositionally biased toward low complexity: residues 184–196 and 245–255; these read AAGE…ASPF and LSLATPSQSSP. Polar residues-rich tracts occupy residues 281–290, 300–329, and 340–354; these read FHSTRNTDTL, RQPQ…NLPL, and RSSS…GENQ. Residues 452–467 are compositionally biased toward pro residues; the sequence is QPNPTWIPPQNAPPHN. The segment covering 485–505 has biased composition (low complexity); it reads SPSASHGGPLPLLPAGPSVSS. The segment at 656 to 697 adopts an RING-type; atypical zinc-finger fold; it reads CCICQEEYVEGDNLGTLKCGHEFHKDCIKQWVMIKNLCPICK.

This sequence belongs to the RING-type zinc finger family. As to quaternary structure, interacts with MED25 and UBC11.

The catalysed reaction is S-ubiquitinyl-[E2 ubiquitin-conjugating enzyme]-L-cysteine + [acceptor protein]-L-lysine = [E2 ubiquitin-conjugating enzyme]-L-cysteine + N(6)-ubiquitinyl-[acceptor protein]-L-lysine.. It participates in protein modification; protein ubiquitination. Functionally, E3 ubiquitin-protein ligase that functions as a regulator of MED25 stability by targeting MED25 for degradation in a RING-H2-dependent way. Proteasome-dependent degradation of MED25 seems to activate its function as positive regulator of FLOWERING LOCUS T (FT) and is important to induce the expression of FT and consequently to promote flowering. The chain is E3 ubiquitin-protein ligase MBR1 (MBR1) from Arabidopsis thaliana (Mouse-ear cress).